Here is a 39-residue protein sequence, read N- to C-terminus: Photosystem II reaction center protein J (39 aa).

Residues 9-29 (LWLVATVGGMAAITVLGIFIY) traverse the membrane as a helical segment.

This sequence belongs to the PsbJ family. In terms of assembly, PSII is composed of 1 copy each of membrane proteins PsbA, PsbB, PsbC, PsbD, PsbE, PsbF, PsbH, PsbI, PsbJ, PsbK, PsbL, PsbM, PsbT, PsbX, PsbY, PsbZ, Psb30/Ycf12, at least 3 peripheral proteins of the oxygen-evolving complex and a large number of cofactors. It forms dimeric complexes.

The protein localises to the plastid. It localises to the chloroplast thylakoid membrane. Functionally, one of the components of the core complex of photosystem II (PSII). PSII is a light-driven water:plastoquinone oxidoreductase that uses light energy to abstract electrons from H(2)O, generating O(2) and a proton gradient subsequently used for ATP formation. It consists of a core antenna complex that captures photons, and an electron transfer chain that converts photonic excitation into a charge separation. The sequence is that of Photosystem II reaction center protein J from Porphyra purpurea (Red seaweed).